The sequence spans 474 residues: MSKKLHIKTWGCQMNEYDSSKMADLLGEYQGYTLTEEAEEADILLLNTCSIREKAQEKVFHQLGRWKTLKDKNPDLIIGVGGCVASQEGKAIKDRAHCVDIIFGPQTLHRLPDMIEQVRRGEKAVIDVSFPEIEKFDRLPEPRAEGPTAFVSIMEGCSKYCSFCVVPYTRGEEVSRPSDDIILEIAQLAEQGVREVNLLGQNVNAYRGATHDGGICTFAELLRYVAAIDGIDRIRFTTSHPIEFTQDIIDVYEDTPELVSFLHLPVQSGSDRILTAMKRGHMAIEYKSIIRRLRKARPDIQISSDFIIGFPGETKEDFADTMKLIEDVAFDHSFSFIYSARPGTPAADLPDDVDMEEKKQRLAILQDRITQQAMRYSRHMMGTVQRILVEGPSVKNPMELRGRTENNRVVNFEGQPKHIGSFVDVEIVDVYTNSLRGKFIRGEDEMDLRRNLRPSDILAKHKQDDDLGVTQFKP.

The MTTase N-terminal domain occupies lysine 3–arginine 120. Positions 12, 49, 83, 157, 161, and 164 each coordinate [4Fe-4S] cluster. The 233-residue stretch at arginine 143–arginine 375 folds into the Radical SAM core domain. The TRAM domain occupies arginine 378–arginine 441.

Belongs to the methylthiotransferase family. MiaB subfamily. Monomer. The cofactor is [4Fe-4S] cluster.

The protein localises to the cytoplasm. It carries out the reaction N(6)-dimethylallyladenosine(37) in tRNA + (sulfur carrier)-SH + AH2 + 2 S-adenosyl-L-methionine = 2-methylsulfanyl-N(6)-dimethylallyladenosine(37) in tRNA + (sulfur carrier)-H + 5'-deoxyadenosine + L-methionine + A + S-adenosyl-L-homocysteine + 2 H(+). Its function is as follows. Catalyzes the methylthiolation of N6-(dimethylallyl)adenosine (i(6)A), leading to the formation of 2-methylthio-N6-(dimethylallyl)adenosine (ms(2)i(6)A) at position 37 in tRNAs that read codons beginning with uridine. This Shewanella sp. (strain MR-7) protein is tRNA-2-methylthio-N(6)-dimethylallyladenosine synthase.